The primary structure comprises 35 residues: Photosystem II reaction center protein T (35 aa).

A helical transmembrane segment spans residues 3 to 23 (ALVYTFLLVSTLGIIFFAIFF).

It belongs to the PsbT family. As to quaternary structure, PSII is composed of 1 copy each of membrane proteins PsbA, PsbB, PsbC, PsbD, PsbE, PsbF, PsbH, PsbI, PsbJ, PsbK, PsbL, PsbM, PsbT, PsbY, PsbZ, Psb30/Ycf12, at least 3 peripheral proteins of the oxygen-evolving complex and a large number of cofactors. It forms dimeric complexes.

It is found in the plastid. It localises to the chloroplast thylakoid membrane. Found at the monomer-monomer interface of the photosystem II (PS II) dimer, plays a role in assembly and dimerization of PSII. PSII is a light-driven water plastoquinone oxidoreductase, using light energy to abstract electrons from H(2)O, generating a proton gradient subsequently used for ATP formation. The chain is Photosystem II reaction center protein T from Cycas revoluta (Sago palm).